We begin with the raw amino-acid sequence, 258 residues long: Type III pantothenate kinase (258 aa).

6-13 (DVGNTNTV) contacts ATP. Substrate-binding positions include Tyr100 and 107–110 (GADR). Residue Asp109 is the Proton acceptor of the active site. Asp129 is a K(+) binding site. Thr132 is a binding site for ATP. Thr184 lines the substrate pocket.

This sequence belongs to the type III pantothenate kinase family. As to quaternary structure, homodimer. NH4(+) is required as a cofactor. K(+) serves as cofactor.

The protein localises to the cytoplasm. It carries out the reaction (R)-pantothenate + ATP = (R)-4'-phosphopantothenate + ADP + H(+). The protein operates within cofactor biosynthesis; coenzyme A biosynthesis; CoA from (R)-pantothenate: step 1/5. Not regulated by feedback inhibition by CoA and its thioesters as described for many other pantothenate kinases. Not inhibited by N-pentylpantothenamide (N5-Pan), and this compound cannot act as a substrate either. In terms of biological role, catalyzes the phosphorylation of pantothenate (Pan), the first step in CoA biosynthesis. Cannot utilize a phosphoryl donor other than ATP. In Bacillus subtilis (strain 168), this protein is Type III pantothenate kinase (coaX).